Here is a 336-residue protein sequence, read N- to C-terminus: UPF0324 membrane protein BT_1919 (336 aa).

The next 8 membrane-spanning stretches (helical) occupy residues 2–19 (LHGVLLIALFSCAAFYIG), 23–45 (FVRSISFSPMIVGIILGMLYANS), 85–107 (IGLPAMLIDVIIVAVTICGGIYL), 117–134 (IALLTSIGSGICGAAAIL), 147–169 (TAVSVSTVVIFGTISMFLYPFLY), 210–232 (AIIVKMIRVMMLVPVLLITTYLV), 253–275 (WFAIGFMGVIAFNSFDLLPAQLV), and 310–332 (FVLALLLYVWLVVGGYFLVKYLT).

Belongs to the UPF0324 family.

It localises to the cell membrane. The polypeptide is UPF0324 membrane protein BT_1919 (Bacteroides thetaiotaomicron (strain ATCC 29148 / DSM 2079 / JCM 5827 / CCUG 10774 / NCTC 10582 / VPI-5482 / E50)).